The sequence spans 2103 residues: uncharacterized protein (2103 aa).

Residues 1 to 12 (MSVPGTPGAMEP) show a composition bias toward low complexity. The interval 1-61 (MSVPGTPGAM…DADDQEEEME (61 aa)) is disordered. A compositionally biased stretch (acidic residues) spans 51–61 (EDADDQEEEME). Residues 77–196 (YELQQGYRIL…MMLEQKLALL (120 aa)) form the Bromo domain. Disordered stretches follow at residues 730–750 (AKHKKHKSGKKSVSKKAITKK), 853–881 (NRELWTTDEGEGDLGKDSPKGEISKSIDS), 933–956 (QSKQTDYVDDSTKELSPRKKAKLS), 1224–1244 (SASPTISSTGQPLSSTTTLNG), and 1770–1817 (GATR…STSP). Over residues 865–877 (DLGKDSPKGEISK) the composition is skewed to basic and acidic residues. A compositionally biased stretch (polar residues) spans 1224–1234 (SASPTISSTGQ). Low complexity predominate over residues 1235 to 1244 (PLSSTTTLNG). A compositionally biased stretch (polar residues) spans 1773-1794 (RSVSISKRQSRTSLQFHSPGIS). Residues 1795–1808 (TTVPTNVNTNKPQT) show a composition bias toward low complexity.

It is found in the nucleus. This is an uncharacterized protein from Homo sapiens (Human).